A 354-amino-acid chain; its full sequence is DNA polymerase IV (354 aa).

The UmuC domain occupies I7–G188. 2 residues coordinate Mg(2+): D11 and D106. E107 is an active-site residue.

The protein belongs to the DNA polymerase type-Y family. In terms of assembly, monomer. Mg(2+) serves as cofactor.

It is found in the cytoplasm. The enzyme catalyses DNA(n) + a 2'-deoxyribonucleoside 5'-triphosphate = DNA(n+1) + diphosphate. Functionally, poorly processive, error-prone DNA polymerase involved in untargeted mutagenesis. Copies undamaged DNA at stalled replication forks, which arise in vivo from mismatched or misaligned primer ends. These misaligned primers can be extended by PolIV. Exhibits no 3'-5' exonuclease (proofreading) activity. May be involved in translesional synthesis, in conjunction with the beta clamp from PolIII. This chain is DNA polymerase IV, found in Shigella boydii serotype 18 (strain CDC 3083-94 / BS512).